Here is a 466-residue protein sequence, read N- to C-terminus: Asparagine--tRNA ligase (466 aa).

This sequence belongs to the class-II aminoacyl-tRNA synthetase family. As to quaternary structure, homodimer.

It is found in the cytoplasm. The catalysed reaction is tRNA(Asn) + L-asparagine + ATP = L-asparaginyl-tRNA(Asn) + AMP + diphosphate + H(+). The sequence is that of Asparagine--tRNA ligase from Myxococcus xanthus (strain DK1622).